The primary structure comprises 178 residues: Large ribosomal subunit protein uL13m (178 aa).

This sequence belongs to the universal ribosomal protein uL13 family. As to quaternary structure, component of the mitochondrial ribosome large subunit (39S) which comprises a 16S rRNA and about 50 distinct proteins. Interacts with OXA1L.

It localises to the mitochondrion. In Bos taurus (Bovine), this protein is Large ribosomal subunit protein uL13m (MRPL13).